Reading from the N-terminus, the 264-residue chain is Cell cycle regulator CcrZ (264 aa).

Phe32, Trp70, and Gly73 together coordinate ATP. Residues 157–164 (HGDVRHSN) carry the Brenner's motif [HXDhX3N] motif. The active-site Proton acceptor is Asp159. The APH motif lies at 173–196 (IYLVDWDSVRLTDRMFDVAHMLCH).

Belongs to the aminoglycoside phosphotransferase family. In terms of assembly, monomer in solution. Interacts with DnaA (via domains I (1-82) and III (111-326)). Interacts with DnaB. Interacts with FtsZ; the interaction is direct and ensures correct localization during the cell cycle.

Its subcellular location is the cytoplasm. It carries out the reaction D-ribose + ATP = D-ribose 5-phosphate + ADP + H(+). It catalyses the reaction 2-deoxy-D-ribose + ATP = 2-deoxy-D-ribose 5-phosphate + ADP + H(+). In terms of biological role, plays a role in cell cycle regulation and chromosome integrity. Activates DnaA-dependent chromosomal DNA replication initiation ensuring that the chromosome is replicated at the right time during the cell cycle. May regulate replication initiation through phosphorylation of a possible second messenger or metabolite, and by interacting with replication initiation proteins. Has ATPase activity with D-ribose and 2-deoxy-D-ribose in vitro, but not with choline. Involved in DNA damage response. This chain is Cell cycle regulator CcrZ, found in Streptococcus pneumoniae serotype 2 (strain D39 / NCTC 7466).